Reading from the N-terminus, the 327-residue chain is ATP-dependent 6-phosphofructokinase (327 aa).

Position 12 (G12) interacts with ATP. Residues 22 to 26 (RGVVR) and 55 to 60 (RYSVSD) contribute to the ADP site. ATP contacts are provided by residues 73–74 (RF) and 103–106 (GDGS). D104 provides a ligand contact to Mg(2+). A substrate-binding site is contributed by 127–129 (TID). D129 (proton acceptor) is an active-site residue. R156 lines the ADP pocket. Residues R164 and 171-173 (MGR) contribute to the substrate site. ADP is bound by residues 187-189 (GCE), K213, and 215-217 (KKH). Residues E224, R245, and 251–254 (HIQR) contribute to the substrate site.

The protein belongs to the phosphofructokinase type A (PFKA) family. ATP-dependent PFK group I subfamily. Prokaryotic clade 'B1' sub-subfamily. Homotetramer. Mg(2+) is required as a cofactor.

It is found in the cytoplasm. The enzyme catalyses beta-D-fructose 6-phosphate + ATP = beta-D-fructose 1,6-bisphosphate + ADP + H(+). It functions in the pathway carbohydrate degradation; glycolysis; D-glyceraldehyde 3-phosphate and glycerone phosphate from D-glucose: step 3/4. With respect to regulation, allosterically activated by ADP and other diphosphonucleosides, and allosterically inhibited by phosphoenolpyruvate. Functionally, catalyzes the phosphorylation of D-fructose 6-phosphate to fructose 1,6-bisphosphate by ATP, the first committing step of glycolysis. The sequence is that of ATP-dependent 6-phosphofructokinase from Yersinia pseudotuberculosis serotype IB (strain PB1/+).